A 171-amino-acid chain; its full sequence is Ribosome maturation factor RimM (171 aa).

A PRC barrel domain is found at 96 to 168 (EDGFYDHELE…TATITPPEGL (73 aa)).

It belongs to the RimM family. In terms of assembly, binds ribosomal protein uS19.

The protein localises to the cytoplasm. In terms of biological role, an accessory protein needed during the final step in the assembly of 30S ribosomal subunit, possibly for assembly of the head region. Essential for efficient processing of 16S rRNA. May be needed both before and after RbfA during the maturation of 16S rRNA. It has affinity for free ribosomal 30S subunits but not for 70S ribosomes. This is Ribosome maturation factor RimM from Corynebacterium glutamicum (strain R).